Consider the following 515-residue polypeptide: Sphingolipid 10-desaturase (515 aa).

A helical membrane pass occupies residues 3–23 (AVWALLWALQLGTLVGCALVL). The region spanning 46-113 (AKPISDQKAA…DISFVFRVMH (68 aa)) is the Cytochrome b5 heme-binding domain. Residues histidine 90 and histidine 113 each coordinate heme. The chain crosses the membrane as a helical span at residues 198–218 (TWLLWNTAVLISIIALSVISM). Residues 245 to 249 (HDAEH) carry the Histidine box-1 motif. A helical transmembrane segment spans residues 258–278 (LNDILGWIYGTVFLGVNGAWW). The Histidine box-2 signature appears at 281–286 (EHREHH). Transmembrane regions (helical) follow at residues 322–342 (IIHFLTNFQHILFLPIIFIVG), 359–379 (PWTILGNVCHILLHYAILSQT), and 382–402 (PIPVYIIGSLWQAILSLQLLG). The short motif at 447 to 451 (HYSHH) is the Histidine box-3 element.

The protein belongs to the fatty acid desaturase type 1 family. It depends on Fe(2+) as a cofactor.

It localises to the membrane. It carries out the reaction a (4E,8E)-4-sphinga-4,8-dienine ceramide + 2 Fe(II)-[cytochrome b5] + O2 + 2 H(+) = an N-acyl-(4E,8E,10E)-sphingatrienine + 2 Fe(III)-[cytochrome b5] + 2 H2O. It participates in lipid metabolism; sphingolipid metabolism. Functionally, fatty acid desaturase that catalyzes the introduction of the third double bond at the Delta(10) position in d18:3Delta4,8,10 triunsaturated sphingolipid long fatty acid chains. The cytochrome b5 domain probably acts as the direct electron donor to the active site of the desaturase. The polypeptide is Sphingolipid 10-desaturase (Thalassiosira pseudonana (Marine diatom)).